Reading from the N-terminus, the 312-residue chain is Taste receptor type 2 member 9 (312 aa).

Residues 1–9 lie on the Extracellular side of the membrane; it reads MPSAIEAIY. Residues 10–32 form a helical membrane-spanning segment; that stretch reads IILIAGELTIGIWGNGFIVLVNC. Residues 33–52 are Cytoplasmic-facing; sequence XDWLKRRDISLIDIILISLA. The chain crosses the membrane as a helical span at residues 53–72; the sequence is ISRICLLCVISLDGFFMLLF. The Extracellular portion of the chain corresponds to 73–86; that stretch reads PGTYGNSVLVSIVN. A helical transmembrane segment spans residues 87–109; that stretch reads VVWTFANNSSLWFTSCLSIFYLL. Residues 110-128 are Cytoplasmic-facing; it reads KIANISHPFFFWLKLKINK. The chain crosses the membrane as a helical span at residues 129-146; that stretch reads VMLAILLGSFLISLIISV. At 147-180 the chain is on the extracellular side; it reads XKNDDMWYHLFKVSXEENITWEFKVSKIPGTFKQ. An N-linked (GlcNAc...) asparagine glycan is attached at Asn-164. Residues 181–203 form a helical membrane-spanning segment; that stretch reads LTLNLGGRVPFILCLISFFLLLF. Topologically, residues 204–234 are cytoplasmic; the sequence is SLVRHTKQIQLHATGFRDPSTEAHMRAIKAV. The chain crosses the membrane as a helical span at residues 235–257; that stretch reads IIFLLLLIVYYPVFLVMTSSALI. At 258-261 the chain is on the extracellular side; sequence PQGK. Residues 262-284 traverse the membrane as a helical segment; the sequence is LVLMIGDIVTVIFPSSHSFILIM. Over 285–312 the chain is Cytoplasmic; it reads GNSKLREAFLKMLRFVKGFLRRRKPFVP.

It belongs to the G-protein coupled receptor T2R family.

The protein localises to the membrane. Functionally, gustducin-coupled receptor implicated in the perception of bitter compounds in the oral cavity and the gastrointestinal tract. Signals through PLCB2 and the calcium-regulated cation channel TRPM5. This is Taste receptor type 2 member 9 (TAS2R9) from Pan troglodytes (Chimpanzee).